The sequence spans 166 residues: Minor capsid protein VP2 (166 aa).

Residues 138–166 (PAPSGFVNPNYQPSPPRLKLGPRPPSTNV) form a disordered region. Over residues 149 to 166 (QPSPPRLKLGPRPPSTNV) the composition is skewed to pro residues.

Belongs to the vesivirus VP2 protein family. As to quaternary structure, homooligomer. The portal-like structure consists in 12 copies of VP2. Interacts with capsid protein VP1.

Its subcellular location is the virion. The protein localises to the host cytoplasm. Minor structural protein that forms a portal-like structure at a unique three-fold axis of symmetry, following binding to the host receptor. The channel formed by VP2 may allow the delivery of the viral genome through the host endosomal membrane. The chain is Minor capsid protein VP2 from Homo sapiens (Human).